Reading from the N-terminus, the 280-residue chain is MLVKNLIIYAVSDSVGETAQQVAKACMSQFYVNETYEIKRFPYMINKGVLLETLENAKAENALIVYTLVDEELCSIVERYCEREGLSCIDLMTDILREISKRTGRKPKREAGIIRKLDESYFKRVEAIEFAVKYDDGKDPRGVLQADIILVGISRTSKTPLSMYLANKNIKVANVPLVPEIPIPKEVFEIDTKKIIGLTNSPEKLNEIRTQRLKALGLSSKANYANLERILQELDYSEEIMKRIGCPVINVSNKAIEETAGIILDIMKENGLKIYKEIEI.

ADP is bound at residue 152–159 (GISRTSKT).

Belongs to the pyruvate, phosphate/water dikinase regulatory protein family. PDRP subfamily.

The catalysed reaction is N(tele)-phospho-L-histidyl/L-threonyl-[pyruvate, phosphate dikinase] + ADP = N(tele)-phospho-L-histidyl/O-phospho-L-threonyl-[pyruvate, phosphate dikinase] + AMP + H(+). The enzyme catalyses N(tele)-phospho-L-histidyl/O-phospho-L-threonyl-[pyruvate, phosphate dikinase] + phosphate + H(+) = N(tele)-phospho-L-histidyl/L-threonyl-[pyruvate, phosphate dikinase] + diphosphate. Its function is as follows. Bifunctional serine/threonine kinase and phosphorylase involved in the regulation of the pyruvate, phosphate dikinase (PPDK) by catalyzing its phosphorylation/dephosphorylation. This Clostridioides difficile (strain 630) (Peptoclostridium difficile) protein is Putative pyruvate, phosphate dikinase regulatory protein.